We begin with the raw amino-acid sequence, 116 residues long: Ig heavy chain V region 441 (116 aa).

The signal sequence occupies residues 1 to 18; it reads MDFGLIFFIVALLKGVQC. One can recognise an Ig-like domain in the interval 19 to 116; sequence EVKLLESGGG…EDTALYYCAR (98 aa).

The polypeptide is Ig heavy chain V region 441 (Mus musculus (Mouse)).